Reading from the N-terminus, the 603-residue chain is Complement factor I (603 aa).

Residues 1–18 (MKLAHLSLFLLALHLSSS) form the signal peptide. Cystine bridges form between Cys-36/Cys-260, Cys-46/Cys-57, Cys-51/Cys-62, Cys-64/Cys-96, Cys-70/Cys-89, Cys-78/Cys-109, Cys-144/Cys-186, Cys-157/Cys-219, Cys-191/Cys-201, Cys-234/Cys-252, Cys-246/Cys-261, Cys-264/Cys-276, Cys-271/Cys-289, Cys-283/Cys-298, Cys-348/Cys-473, Cys-386/Cys-402, Cys-394/Cys-464, Cys-487/Cys-551, Cys-515/Cys-530, and Cys-541/Cys-570. The region spanning 58–111 (IEGTCICKLPYQCPRAGTPVCAMNGRSYPTYCHQKSFECLHPEIKFSHNGTCAA) is the Kazal-like domain. 4 N-linked (GlcNAc...) asparagine glycosylation sites follow: Asn-106, Asn-116, Asn-174, and Asn-182. Residues 117–217 (VSLIYGRTKT…TELSNGLAGV (101 aa)) enclose the SRCR domain. LDL-receptor class A domains lie at 218 to 262 (VCYK…LCCK) and 263 to 299 (GCRG…SRCE). Ca(2+) is bound by residues Lys-244, Asn-247, Val-249, Asp-251, Asp-257, and Glu-258. Residue Asn-267 is glycosylated (N-linked (GlcNAc...) asparagine). 6 residues coordinate Ca(2+): Tyr-281, Asn-284, Glu-286, Asp-288, Asp-294, and Glu-295. In terms of domain architecture, Peptidase S1 spans 361–594 (VIGGKPANVG…YFDWISYHVG (234 aa)). Residues His-401 and Asp-449 each act as charge relay system in the active site. Residue Asn-514 is glycosylated (N-linked (GlcNAc...) asparagine). Ser-545 functions as the Charge relay system in the catalytic mechanism. Residue Asn-556 is glycosylated (N-linked (GlcNAc...) asparagine).

Belongs to the peptidase S1 family. Heterodimer of a light and heavy chains; disulfide-linked. The fully processed and mature protein circulates as a zymogen, and is allosterically activated by substrate-induced remodeling of the active site. Interacts with C3b. Interacts with complement factor H. Expressed in the liver by hepatocytes. Also present in other cells such as monocytes, fibroblasts or keratinocytes.

Its subcellular location is the secreted. It localises to the extracellular space. It carries out the reaction Inactivates complement subcomponents C3b, iC3b and C4b by proteolytic cleavage.. Trypsin-like serine protease that plays an essential role in regulating the immune response by controlling all complement pathways. Inhibits these pathways by cleaving three peptide bonds in the alpha-chain of C3b and two bonds in the alpha-chain of C4b thereby inactivating these proteins. Essential cofactors for these reactions include factor H and C4BP in the fluid phase and membrane cofactor protein/CD46 and CR1 on cell surfaces. The presence of these cofactors on healthy cells allows degradation of deposited C3b by CFI in order to prevent undesired complement activation, while in apoptotic cells or microbes, the absence of such cofactors leads to C3b-mediated complement activation and subsequent opsonization. The polypeptide is Complement factor I (Cfi) (Mus musculus (Mouse)).